The sequence spans 126 residues: Nitrogenase-stabilizing/protective protein NifW (126 aa).

The tract at residues 104–126 (VPMSEITVERPATTQTDEKGQQR) is disordered.

It belongs to the NifW family. In terms of assembly, homotrimer; associates with NifD.

Its function is as follows. May protect the nitrogenase Fe-Mo protein from oxidative damage. The protein is Nitrogenase-stabilizing/protective protein NifW of Parafrankia sp. (strain EAN1pec).